A 282-amino-acid polypeptide reads, in one-letter code: Protease HtpX homolog (282 aa).

The next 2 helical transmembrane spans lie at 7 to 26 and 30 to 49; these read TTVL…GAVG and GMMI…YWFS. His-131 lines the Zn(2+) pocket. The active site involves Glu-132. His-135 is a Zn(2+) binding site. 2 helical membrane-spanning segments follow: residues 141-161 and 183-203; these read ILVS…ARMA and LGLV…QLAI. Residue Glu-208 coordinates Zn(2+).

Belongs to the peptidase M48B family. Requires Zn(2+) as cofactor.

It localises to the cell inner membrane. This Syntrophobacter fumaroxidans (strain DSM 10017 / MPOB) protein is Protease HtpX homolog.